The chain runs to 281 residues: Large ribosomal subunit protein uL2 (281 aa).

2 disordered regions span residues 1–23 (MAVK…DYSK) and 224–281 (RGSV…KDSK). Residues 12–23 (GRRNMSSLDYSK) are compositionally biased toward polar residues. The span at 261–281 (KTRKTKKSSTKLILRRRKDSK) shows a compositional bias: basic residues.

Belongs to the universal ribosomal protein uL2 family. As to quaternary structure, part of the 50S ribosomal subunit. Forms a bridge to the 30S subunit in the 70S ribosome.

In terms of biological role, one of the primary rRNA binding proteins. Required for association of the 30S and 50S subunits to form the 70S ribosome, for tRNA binding and peptide bond formation. It has been suggested to have peptidyltransferase activity; this is somewhat controversial. Makes several contacts with the 16S rRNA in the 70S ribosome. In Mycoplasmopsis agalactiae (strain NCTC 10123 / CIP 59.7 / PG2) (Mycoplasma agalactiae), this protein is Large ribosomal subunit protein uL2.